Here is a 593-residue protein sequence, read N- to C-terminus: Aspartate--tRNA ligase (593 aa).

Glu180 serves as a coordination point for L-aspartate. The aspartate stretch occupies residues 204–207; the sequence is QIFK. Arg226 lines the L-aspartate pocket. ATP-binding positions include 226–228 and Gln235; that span reads RDE. His453 lines the L-aspartate pocket. An ATP-binding site is contributed by Glu487. L-aspartate is bound at residue Arg494. Residue 539–542 participates in ATP binding; the sequence is GLDR.

This sequence belongs to the class-II aminoacyl-tRNA synthetase family. Type 1 subfamily. As to quaternary structure, homodimer.

It is found in the cytoplasm. The enzyme catalyses tRNA(Asp) + L-aspartate + ATP = L-aspartyl-tRNA(Asp) + AMP + diphosphate. Functionally, catalyzes the attachment of L-aspartate to tRNA(Asp) in a two-step reaction: L-aspartate is first activated by ATP to form Asp-AMP and then transferred to the acceptor end of tRNA(Asp). The sequence is that of Aspartate--tRNA ligase from Clostridium botulinum (strain 657 / Type Ba4).